Here is a 379-residue protein sequence, read N- to C-terminus: Gonadotropin-releasing hormone II receptor (379 aa).

At 1 to 40 (MSAGNGTPWGSAVGEEAWAGSGVAVEGSELPTFSTAAKVR) the chain is on the extracellular side. A helical transmembrane segment spans residues 41–60 (VGVTIVLFVSSAGGNLAVLW). Residues 61 to 76 (SVTRPQPSQLRPSPVR) are Cytoplasmic-facing. The chain crosses the membrane as a helical span at residues 77–96 (TLFAHLAAADLLVTFVVMPL). Residues 97–114 (DATWNITVQWLAGDIACR) lie on the Extracellular side of the membrane. Asn-101 carries an N-linked (GlcNAc...) asparagine glycan. Residues Cys-113 and Cys-188 are joined by a disulfide bond. Residues 115-136 (TLMFLKLMAMYSAAFLPVVIGL) form a helical membrane-spanning segment. Over 137 to 160 (DRQAAVLNPLGSRSGVRKLLGAAW) the chain is Cytoplasmic. Residues 161–178 (GLSFLLALPQLFLFHTVH) form a helical membrane-spanning segment. Topologically, residues 179-204 (RAGPVPFTQCVTKGSFKARWQETTYN) are extracellular. Residues 205 to 224 (LFTFCCLFLLPLIAMAICYS) traverse the membrane as a helical segment. Residues 225–278 (RIVLSVSSPQTRKGSHAPAGEFALRRSFDNRPRVCLRALRLALLILLTFILCWT) lie on the Cytoplasmic side of the membrane. The chain crosses the membrane as a helical span at residues 279–297 (PYYLLGLWYWFSPTMLTEV). The Extracellular portion of the chain corresponds to 298–303 (PPSLSH). Residues 304–323 (ILFLFGLLNAPLDPLLYGAF) traverse the membrane as a helical segment. At 324–379 (TFGCRRGHQELSIDSSKEGSGRMLQQEIHALRQQEVQKTVTSRSAGETKGISITSI) the chain is on the cytoplasmic side.

The protein belongs to the G-protein coupled receptor 1 family. Phosphorylated on the C-terminal cytoplasmic tail.

The protein resides in the cell membrane. Functionally, receptor for gonadotropin releasing hormone II (GnRH II). This receptor mediates its action by association with G proteins that activate a phosphatidylinositol-calcium second messenger system. The chain is Gonadotropin-releasing hormone II receptor (GNRHR2) from Chlorocebus aethiops (Green monkey).